The following is a 201-amino-acid chain: MYDYIKGTVTTITPEYIVVEAGQIGYQIITGNPFSFQRLEGTEAQVFLYQHVREDNISLFGFQTTEERYLFKKLLSVSGIGPKSALAIIASGDVVPLISAIESEDDVYLTKFPSVGKKTARQIILDLKGKLADVVASEIVYVAPENDMVAGLSPQLEEAVLALEALGYSTRELKKVIPKLAKEADLTSDAYIKLALQLMTK.

Residues M1–Q63 form a domain I region. The domain II stretch occupies residues T64–V142. The tract at residues A143–S153 is flexible linker. The interval S153–K201 is domain III.

This sequence belongs to the RuvA family. Homotetramer. Forms an RuvA(8)-RuvB(12)-Holliday junction (HJ) complex. HJ DNA is sandwiched between 2 RuvA tetramers; dsDNA enters through RuvA and exits via RuvB. An RuvB hexamer assembles on each DNA strand where it exits the tetramer. Each RuvB hexamer is contacted by two RuvA subunits (via domain III) on 2 adjacent RuvB subunits; this complex drives branch migration. In the full resolvosome a probable DNA-RuvA(4)-RuvB(12)-RuvC(2) complex forms which resolves the HJ.

Its subcellular location is the cytoplasm. The RuvA-RuvB-RuvC complex processes Holliday junction (HJ) DNA during genetic recombination and DNA repair, while the RuvA-RuvB complex plays an important role in the rescue of blocked DNA replication forks via replication fork reversal (RFR). RuvA specifically binds to HJ cruciform DNA, conferring on it an open structure. The RuvB hexamer acts as an ATP-dependent pump, pulling dsDNA into and through the RuvAB complex. HJ branch migration allows RuvC to scan DNA until it finds its consensus sequence, where it cleaves and resolves the cruciform DNA. In Listeria monocytogenes serovar 1/2a (strain ATCC BAA-679 / EGD-e), this protein is Holliday junction branch migration complex subunit RuvA.